A 274-amino-acid polypeptide reads, in one-letter code: Karrikin insensitive 2 receptor IA (274 aa).

Residue Ser95 is the Nucleophile of the active site. Catalysis depends on residues Asp217 and His246.

Belongs to the AB hydrolase superfamily. In terms of assembly, interacts with MAX2A and MAX2B in the presence of (-)-germacrene D, thus forming an E3 SCF ubiquitin ligase complex (ASK-cullin-F-box) containing MAX2A or MAX2B and KAI2IA recognizing SMAX1A; this leads to the subsequent degradation of the transcriptional corepressor SMAX1A, thus triggering the activation of a downstream signaling cascade. As to expression, strongly expressed in stigma.

The protein resides in the nucleus. The protein localises to the cytoplasm. Its activity is regulated as follows. Hydrolysis activity toward yoshimulactone green (YLG), a fluorescent agonist to strigolactone receptor, is inhibited by (-)-germacrene D and GR24, a synthetic strigolactone analog. Its function is as follows. Hydrolase involved in the olfaction of sesquiterpene volatile organic compounds (VOCs) during volatile plant communication in a MAX2 proteins-dependent manner. Acts as a karrikin-insensitive receptor that stereospecifically perceives and binds to (-)-germacrene D, particularly in stigmas, and triggers a signaling cascade influencing plant fitness, as the result of reproductive organ growth-promoting effect; this process involves an interaction with MAX2 proteins (e.g. MAX2A and MAX2B) and the subsequent degradation of SMAX1a, a transcriptional corepressor. The polypeptide is Karrikin insensitive 2 receptor IA (Petunia hybrida (Petunia)).